The sequence spans 276 residues: Cruxhalorhodopsin-3 (276 aa).

Residues 1–21 (MPAASTAATTLLQASQSEVLG) constitute a propeptide that is removed on maturation. At 22–25 (EIQS) the chain is on the extracellular side. The helical transmembrane segment at 26–51 (NFLLNSSLWVNIALAGVVILLFVAMG) threads the bilayer. The Cytoplasmic segment spans residues 52 to 57 (RELESS). A helical membrane pass occupies residues 58–81 (RAKLIWVATMLVPLVSISSYAGLA). The Extracellular segment spans residues 82–105 (SGLTVGFLQMPPGHALAGQEVLSP). A helical membrane pass occupies residues 106–127 (WGRYLTWTFSTPMILLALGLLA). Topologically, residues 128–130 (DTD) are cytoplasmic. Residues 131 to 154 (MASLFTAITMDIGMCITGLAAALV) traverse the membrane as a helical segment. The Extracellular portion of the chain corresponds to 155–157 (TSS). Residues 158–180 (HLLRWVFYGISCAFFIAVLYVLL) traverse the membrane as a helical segment. Residues 181-192 (VEWPADAEAAGT) lie on the Cytoplasmic side of the membrane. The chain crosses the membrane as a helical span at residues 193-216 (SEIFGTLKLLTVVLWLGYPILWAL). Over 217–225 (GSEGVALLS) the chain is Extracellular. Residues 226–254 (VGVTSWGYSGLDILAKYVFAFLLLRWVAA) traverse the membrane as a helical segment. At K241 the chain carries N6-(retinylidene)lysine. Residues 255-276 (NEDTVTQAGMSLGSGGAAPADD) are Cytoplasmic-facing.

It belongs to the archaeal/bacterial/fungal opsin family.

Its subcellular location is the cell membrane. Functionally, light-driven chloride pump. This Haloarcula vallismortis (Halobacterium vallismortis) protein is Cruxhalorhodopsin-3 (choP3).